A 1318-amino-acid chain; its full sequence is Meiotically up-regulated gene 79 protein (1318 aa).

Disordered regions lie at residues 177–198 (PVNS…SGSY), 208–227 (EEEL…IVVT), and 360–387 (PQAL…PPKG). The segment covering 364–384 (AAAESPTTKAPTTKAPTSEAP) has biased composition (low complexity). The 110-residue stretch at 1049–1158 (MISYKKMVLS…WIHSLNFNAA (110 aa)) folds into the PH domain.

The protein resides in the nucleus. Its function is as follows. Appears to have a role in sporulation. This is Meiotically up-regulated gene 79 protein (mug79) from Schizosaccharomyces pombe (strain 972 / ATCC 24843) (Fission yeast).